A 645-amino-acid polypeptide reads, in one-letter code: DNA mismatch repair protein MutL (645 aa).

Disordered stretches follow at residues R353–Q381 and Q395–G420.

The protein belongs to the DNA mismatch repair MutL/HexB family.

Functionally, this protein is involved in the repair of mismatches in DNA. It is required for dam-dependent methyl-directed DNA mismatch repair. May act as a 'molecular matchmaker', a protein that promotes the formation of a stable complex between two or more DNA-binding proteins in an ATP-dependent manner without itself being part of a final effector complex. The polypeptide is DNA mismatch repair protein MutL (Pseudomonas syringae pv. tomato (strain ATCC BAA-871 / DC3000)).